The sequence spans 126 residues: Histone H2B 8 (126 aa).

A compositionally biased stretch (low complexity) spans M1–K12. A disordered region spans residues M1–K35. An N6-acetyllysine mark is found at K6 and K13. Basic residues predominate over residues K13–R34. S15 is subject to Phosphoserine. 2 positions are modified to N6-acetyllysine: K16 and K21. S113 carries an O-linked (GlcNAc) serine glycan. K121 participates in a covalent cross-link: Glycyl lysine isopeptide (Lys-Gly) (interchain with G-Cter in ubiquitin).

Belongs to the histone H2B family. The nucleosome is a histone octamer containing two molecules each of H2A, H2B, H3 and H4 assembled in one H3-H4 heterotetramer and two H2A-H2B heterodimers. The octamer wraps approximately 147 bp of DNA. Monoubiquitination of Lys-121 by the BRE1 gives a specific tag for epigenetic transcriptional activation and is also prerequisite for histone H3 'Lys-4' and 'Lys-79' methylation. In terms of processing, phosphorylated on Ser-15 during apoptosis; which facilitates apoptotic chromatin condensation. Post-translationally, glcNAcylation at Ser-113 promotes monoubiquitination of Lys-121. It fluctuates in response to extracellular glucose, and associates with transcribed genes.

It localises to the nucleus. The protein localises to the chromosome. Its function is as follows. Core component of nucleosome. Nucleosomes wrap and compact DNA into chromatin, limiting DNA accessibility to the cellular machineries which require DNA as a template. Histones thereby play a central role in transcription regulation, DNA repair, DNA replication and chromosomal stability. DNA accessibility is regulated via a complex set of post-translational modifications of histones, also called histone code, and nucleosome remodeling. This is Histone H2B 8 (H2B-VIII) from Gallus gallus (Chicken).